We begin with the raw amino-acid sequence, 281 residues long: Phytanoyl-CoA dioxygenase 1 (281 aa).

2-oxoglutarate contacts are provided by residues K98, M137, 152-154 (HQD), and W169. H152 and D154 together coordinate Fe cation. H237 contacts Fe cation. 2-oxoglutarate is bound by residues S239 and R248.

This sequence belongs to the PhyH family. It depends on Fe cation as a cofactor. Requires L-ascorbate as cofactor.

It carries out the reaction phytanoyl-CoA + 2-oxoglutarate + O2 = 2-hydroxyphytanoyl-CoA + succinate + CO2. It participates in lipid metabolism; fatty acid metabolism. In terms of biological role, converts phytanoyl-CoA to 2-hydroxyphytanoyl-CoA. The chain is Phytanoyl-CoA dioxygenase 1 from Oryza sativa subsp. japonica (Rice).